Here is a 118-residue protein sequence, read N- to C-terminus: V-type proton ATPase subunit G 2 (118 aa).

The segment at 26–90 (RKRKARRLKQ…VQGMQSSQQR (65 aa)) is disordered. Positions 35 to 55 (QAKEEAQMEVEQYRREREQEF) are enriched in basic and acidic residues. 2 stretches are compositionally biased toward polar residues: residues 56–69 (QSKQ…QGNL) and 78–89 (RRQVQGMQSSQQ).

The protein belongs to the V-ATPase G subunit family. V-ATPase is a heteromultimeric enzyme made up of two complexes: the ATP-hydrolytic V1 complex and the proton translocation V0 complex. The V1 complex consists of three catalytic AB heterodimers that form a heterohexamer, three peripheral stalks each consisting of EG heterodimers, one central rotor including subunits D and F, and the regulatory subunits C and H. The proton translocation complex V0 consists of the proton transport subunit a, a ring of proteolipid subunits c9c'', rotary subunit d, subunits e and f, and the accessory subunits ATP6AP1/Ac45 and ATP6AP2/PRR.

The protein resides in the melanosome. It localises to the cytoplasmic vesicle. It is found in the clathrin-coated vesicle membrane. In terms of biological role, subunit of the V1 complex of vacuolar(H+)-ATPase (V-ATPase), a multisubunit enzyme composed of a peripheral complex (V1) that hydrolyzes ATP and a membrane integral complex (V0) that translocates protons. V-ATPase is responsible for acidifying and maintaining the pH of intracellular compartments and in some cell types, is targeted to the plasma membrane, where it is responsible for acidifying the extracellular environment. The sequence is that of V-type proton ATPase subunit G 2 (ATP6V1G2) from Sus scrofa (Pig).